We begin with the raw amino-acid sequence, 165 residues long: Nascent polypeptide-associated complex subunit beta (165 aa).

Disordered stretches follow at residues 1-34 (MDQA…TSGA) and 133-165 (QNMQ…KSVD). Residues 20–30 (TPRRKVKKVHK) show a composition bias toward basic residues. One can recognise an NAC-A/B domain in the interval 33–110 (GADDKKLQAT…GEEKELTELV (78 aa)). A compositionally biased stretch (acidic residues) spans 145–158 (DDDEDDIPDLVEGE).

Belongs to the NAC-beta family. In terms of assembly, part of the nascent polypeptide-associated complex (NAC), consisting of egd2 and egd1. NAC associates with ribosomes via egd1.

It localises to the cytoplasm. Its subcellular location is the nucleus. Its function is as follows. Component of the nascent polypeptide-associated complex (NAC), a dynamic component of the ribosomal exit tunnel, protecting the emerging polypeptides from interaction with other cytoplasmic proteins to ensure appropriate nascent protein targeting. The NAC complex also promotes mitochondrial protein import by enhancing productive ribosome interactions with the outer mitochondrial membrane and blocks the inappropriate interaction of ribosomes translating non-secretory nascent polypeptides with translocation sites in the membrane of the endoplasmic reticulum. EGD1 may act as a transcription factor that exert a negative effect on the expression of several genes that are transcribed by RNA polymerase II. This chain is Nascent polypeptide-associated complex subunit beta (egd1), found in Emericella nidulans (strain FGSC A4 / ATCC 38163 / CBS 112.46 / NRRL 194 / M139) (Aspergillus nidulans).